We begin with the raw amino-acid sequence, 130 residues long: ATP synthase epsilon chain, chloroplastic (130 aa).

Belongs to the ATPase epsilon chain family. F-type ATPases have 2 components, CF(1) - the catalytic core - and CF(0) - the membrane proton channel. CF(1) has five subunits: alpha(3), beta(3), gamma(1), delta(1), epsilon(1). CF(0) has three main subunits: a, b and c.

It is found in the plastid. It localises to the chloroplast thylakoid membrane. Its function is as follows. Produces ATP from ADP in the presence of a proton gradient across the membrane. This Emiliania huxleyi (Coccolithophore) protein is ATP synthase epsilon chain, chloroplastic.